The chain runs to 359 residues: MYKNQLQELAQRSCFSLPSYTCTREGPDHAPRFKASVNFNGEIFESPTYCSTLRQAEHSAAEVALSALSSKGPSKSLTARVLDETGIYKNLLQETAHRAGLDLPVYTSVRSGPGHIPTFSCTVELAGMSFNGESAKTKKQAEKNAAIAAWFSLRKMPRLDPLRGEEKEQEIVARVLSRFRPKEVKRREPNQSRRRTVIRTIRQNTTTTTTTTGDLLCEKLRSINLYTNEASSSSPPPQRFWPSRTNLTQEQSKVKSLLEKCQEYAEKKQSLDDPKPEMRIKTSSPSPLSSSVERNCYSKLLPFPSFVLNHQKLAPAVHIRSVIPVCSAPPPKPNPNPNSSPFITRELGNGSQEKKSLPN.

2 DRBM domains span residues 1–70 and 87–155; these read MYKN…ALSS and IYKN…SLRK. Basic and acidic residues predominate over residues 266-280; it reads EKKQSLDDPKPEMRI. Disordered stretches follow at residues 266–292 and 328–359; these read EKKQ…SSSV and APPP…SLPN. Over residues 328 to 338 the composition is skewed to pro residues; sequence APPPKPNPNPN.

In terms of biological role, binds double-stranded RNA. This Arabidopsis thaliana (Mouse-ear cress) protein is Double-stranded RNA-binding protein 3 (DRB3).